Here is a 64-residue protein sequence, read N- to C-terminus: DNA-binding protein 7b (64 aa).

Belongs to the 7 kDa DNA-binding/endoribonuclease P2 family. In terms of assembly, monomer.

It is found in the cytoplasm. Can constrain negative DNA supercoils. May be involved in maintaining the integrity of the genome at high temperature. This chain is DNA-binding protein 7b, found in Saccharolobus islandicus (strain HVE10/4) (Sulfolobus islandicus).